A 282-amino-acid polypeptide reads, in one-letter code: Pantothenate synthetase (282 aa).

Residue 33–40 coordinates ATP; sequence MGALHAGH. The Proton donor role is filled by His-40. Gln-64 contacts (R)-pantoate. Residue Gln-64 coordinates beta-alanine. 150-153 is a binding site for ATP; the sequence is GEKD. Gln-156 lines the (R)-pantoate pocket. Residues Val-179 and 187–190 each bind ATP; that span reads LSSR.

It belongs to the pantothenate synthetase family. As to quaternary structure, homodimer.

The protein resides in the cytoplasm. The enzyme catalyses (R)-pantoate + beta-alanine + ATP = (R)-pantothenate + AMP + diphosphate + H(+). The protein operates within cofactor biosynthesis; (R)-pantothenate biosynthesis; (R)-pantothenate from (R)-pantoate and beta-alanine: step 1/1. Its function is as follows. Catalyzes the condensation of pantoate with beta-alanine in an ATP-dependent reaction via a pantoyl-adenylate intermediate. The polypeptide is Pantothenate synthetase (Rhodospirillum rubrum (strain ATCC 11170 / ATH 1.1.1 / DSM 467 / LMG 4362 / NCIMB 8255 / S1)).